The chain runs to 245 residues: 4-hydroxy-tetrahydrodipicolinate reductase (245 aa).

NAD(+)-binding positions include 7-12, 75-77, and 102-105; these read GAKGKV, GTT, and APNF. Catalysis depends on histidine 132, which acts as the Proton donor/acceptor. Histidine 133 is a (S)-2,3,4,5-tetrahydrodipicolinate binding site. The active-site Proton donor is lysine 136. 142-143 lines the (S)-2,3,4,5-tetrahydrodipicolinate pocket; it reads GT.

This sequence belongs to the DapB family.

It localises to the cytoplasm. It catalyses the reaction (S)-2,3,4,5-tetrahydrodipicolinate + NAD(+) + H2O = (2S,4S)-4-hydroxy-2,3,4,5-tetrahydrodipicolinate + NADH + H(+). The catalysed reaction is (S)-2,3,4,5-tetrahydrodipicolinate + NADP(+) + H2O = (2S,4S)-4-hydroxy-2,3,4,5-tetrahydrodipicolinate + NADPH + H(+). Its pathway is amino-acid biosynthesis; L-lysine biosynthesis via DAP pathway; (S)-tetrahydrodipicolinate from L-aspartate: step 4/4. Its function is as follows. Catalyzes the conversion of 4-hydroxy-tetrahydrodipicolinate (HTPA) to tetrahydrodipicolinate. The chain is 4-hydroxy-tetrahydrodipicolinate reductase from Mycobacterium bovis (strain BCG / Pasteur 1173P2).